Reading from the N-terminus, the 210-residue chain is tRNA (guanine-N(7)-)-methyltransferase (210 aa).

The S-adenosyl-L-methionine site is built by Glu-43, Glu-68, Asp-95, and Asp-117. Asp-117 is an active-site residue. Substrate-binding positions include Lys-121, Asp-153, and Thr-190–Glu-193.

This sequence belongs to the class I-like SAM-binding methyltransferase superfamily. TrmB family.

The enzyme catalyses guanosine(46) in tRNA + S-adenosyl-L-methionine = N(7)-methylguanosine(46) in tRNA + S-adenosyl-L-homocysteine. It participates in tRNA modification; N(7)-methylguanine-tRNA biosynthesis. In terms of biological role, catalyzes the formation of N(7)-methylguanine at position 46 (m7G46) in tRNA. This chain is tRNA (guanine-N(7)-)-methyltransferase, found in Macrococcus caseolyticus (strain JCSC5402) (Macrococcoides caseolyticum).